The primary structure comprises 131 residues: uncharacterized protein (131 aa).

This is an uncharacterized protein from Aquifex aeolicus (strain VF5).